Consider the following 321-residue polypeptide: Glucokinase (321 aa).

An ATP-binding site is contributed by 8–13 (GDVGGT).

The protein belongs to the bacterial glucokinase family.

It localises to the cytoplasm. The catalysed reaction is D-glucose + ATP = D-glucose 6-phosphate + ADP + H(+). The chain is Glucokinase from Erwinia tasmaniensis (strain DSM 17950 / CFBP 7177 / CIP 109463 / NCPPB 4357 / Et1/99).